Consider the following 344-residue polypeptide: Anthranilate phosphoribosyltransferase (344 aa).

Residues Gly-86, 89–90 (GD), Thr-94, 96–99 (NIST), 114–122 (KHGNKSASG), and Ser-126 contribute to the 5-phospho-alpha-D-ribose 1-diphosphate site. Anthranilate is bound at residue Gly-86. Ser-98 serves as a coordination point for Mg(2+). Asn-117 contacts anthranilate. Residue Arg-172 coordinates anthranilate. Asp-231 and Glu-232 together coordinate Mg(2+).

Belongs to the anthranilate phosphoribosyltransferase family. Homodimer. Requires Mg(2+) as cofactor.

The enzyme catalyses N-(5-phospho-beta-D-ribosyl)anthranilate + diphosphate = 5-phospho-alpha-D-ribose 1-diphosphate + anthranilate. It functions in the pathway amino-acid biosynthesis; L-tryptophan biosynthesis; L-tryptophan from chorismate: step 2/5. Its function is as follows. Catalyzes the transfer of the phosphoribosyl group of 5-phosphorylribose-1-pyrophosphate (PRPP) to anthranilate to yield N-(5'-phosphoribosyl)-anthranilate (PRA). The chain is Anthranilate phosphoribosyltransferase from Prochlorococcus marinus (strain MIT 9301).